The chain runs to 234 residues: Large ribosomal subunit protein uL1 (234 aa).

Belongs to the universal ribosomal protein uL1 family. As to quaternary structure, part of the 50S ribosomal subunit.

Binds directly to 23S rRNA. The L1 stalk is quite mobile in the ribosome, and is involved in E site tRNA release. Its function is as follows. Protein L1 is also a translational repressor protein, it controls the translation of the L11 operon by binding to its mRNA. The polypeptide is Large ribosomal subunit protein uL1 (Escherichia coli (strain 55989 / EAEC)).